The primary structure comprises 400 residues: Probable tRNA pseudouridine synthase D (400 aa).

Asp89 (nucleophile) is an active-site residue. The TRUD domain occupies 162 to 357; that stretch reads GVPNYYGLQR…AGGDRKPALL (196 aa).

It belongs to the pseudouridine synthase TruD family.

The enzyme catalyses uridine(13) in tRNA = pseudouridine(13) in tRNA. Functionally, could be responsible for synthesis of pseudouridine from uracil-13 in transfer RNAs. The protein is Probable tRNA pseudouridine synthase D of Methanopyrus kandleri (strain AV19 / DSM 6324 / JCM 9639 / NBRC 100938).